We begin with the raw amino-acid sequence, 419 residues long: Histidine--tRNA ligase (419 aa).

Belongs to the class-II aminoacyl-tRNA synthetase family. Homodimer.

The protein resides in the cytoplasm. It carries out the reaction tRNA(His) + L-histidine + ATP = L-histidyl-tRNA(His) + AMP + diphosphate + H(+). This Caldicellulosiruptor saccharolyticus (strain ATCC 43494 / DSM 8903 / Tp8T 6331) protein is Histidine--tRNA ligase.